The following is a 626-amino-acid chain: Probable potassium transport system protein Kup (626 aa).

Helical transmembrane passes span 13–33 (VALM…SPLY), 53–73 (VLSI…VLLI), 102–122 (FFVV…MITP), 138–158 (HTLD…LFAI), 169–189 (LFGP…GWQV), 207–227 (FVFE…LALT), 248–268 (WFSM…ALLL), 277–297 (PFFL…ATVA), 338–358 (IYLP…VITF), 367–387 (AYGF…FAVL), 399–419 (WMLV…ANIF), and 421–441 (IHEG…LMMT).

This sequence belongs to the HAK/KUP transporter (TC 2.A.72) family.

Its subcellular location is the cell inner membrane. It catalyses the reaction K(+)(in) + H(+)(in) = K(+)(out) + H(+)(out). In terms of biological role, transport of potassium into the cell. Likely operates as a K(+):H(+) symporter. In Bordetella avium (strain 197N), this protein is Probable potassium transport system protein Kup.